The primary structure comprises 235 residues: Large ribosomal subunit protein uL1 (235 aa).

The protein belongs to the universal ribosomal protein uL1 family. As to quaternary structure, part of the 50S ribosomal subunit.

Functionally, binds directly to 23S rRNA. The L1 stalk is quite mobile in the ribosome, and is involved in E site tRNA release. In terms of biological role, protein L1 is also a translational repressor protein, it controls the translation of the L11 operon by binding to its mRNA. In Pseudarthrobacter chlorophenolicus (strain ATCC 700700 / DSM 12829 / CIP 107037 / JCM 12360 / KCTC 9906 / NCIMB 13794 / A6) (Arthrobacter chlorophenolicus), this protein is Large ribosomal subunit protein uL1.